The chain runs to 403 residues: MSDLSPERFKLAVTSPSSIPESSSALQLHHSYSRKQKSLGLLCTNFLALYNREGIEMVGLDDAASKLGVERRRIYDIVNVLESVGVLTRRAKNQYTWKGFSAIPGALKELQEEGVKDTFHRFYVNENVKGSDDEDDDEESSQPHSSSQTDSSKPGSLPQSSDPSKIDNRREKSLGLLTQNFIKLFICSEAIRIISLDDAAKLLLGDAHNTSIMRTKVRRLYDIANVLSSMNLIEKTHTLDSRKPAFKWLGYNGEPTFTLSSDLLQLESRKRAFGTDITNVNVKRSKSSSSSQENATERRLKMKKHSTPESSYNKSFDVHESRHGSRGGYHFGPFAPGTGTYPTAGLEDNSRRAFDVENLDSDYRPSYQNQVLKDLFSHYMDAWKTWFSEVTQENPLPNTSQHR.

The DNA-binding element occupies 34-99 (RKQKSLGLLC…RAKNQYTWKG (66 aa)). Residues 128 to 167 (VKGSDDEDDDEESSQPHSSSQTDSSKPGSLPQSSDPSKID) form a disordered region. Residues 142 to 152 (QPHSSSQTDSS) show a composition bias toward low complexity. Residues 153 to 163 (KPGSLPQSSDP) show a composition bias toward polar residues. Residues 169–250 (RREKSLGLLT…SRKPAFKWLG (82 aa)) mediate DNA binding. The tract at residues 282–319 (VKRSKSSSSSQENATERRLKMKKHSTPESSYNKSFDVH) is disordered.

This sequence belongs to the E2F/DP family. In terms of tissue distribution, expressed exclusively in mitotically dividing cells. Highly expressed in young leaves and mature flowers. Lower expression in young stalk and in young and mature flowers.

The protein localises to the nucleus. Its function is as follows. Inhibitor of E2F-dependent activation of gene expression. Binds specifically the E2 recognition site without interacting with DP proteins and prevents transcription activation by E2F/DP heterodimers. Controls the timing of endocycle onset and inhibits endoreduplication. This Arabidopsis thaliana (Mouse-ear cress) protein is E2F transcription factor-like E2FE (E2FE).